The chain runs to 238 residues: MRALLALCLLLGWLRWGPAGAQQSGEYCHGWVDVQGNYHEGFQCPEDFDTLDATICCGSCALRYCCAAADARLEQGGCTNDRRELEHPGITAQPVYVPFLIVGSIFIAFIILGSVVAIYCCTCLRPKEPSQQPIRFSLRSYQTETLPMILTSTSPRAPSRQSSTATSSSSTGGSIRRFSFARAEPGCLVPSPPPPYTTSHSIHLAQPSGFLVSPQYFAYPLQQEPPLPGKSCPDFSSS.

The N-terminal stretch at 1–21 is a signal peptide; that stretch reads MRALLALCLLLGWLRWGPAGA. Over 22–98 the chain is Lumenal; the sequence is QQSGEYCHGW…GITAQPVYVP (77 aa). The chain crosses the membrane as a helical span at residues 99–119; sequence FLIVGSIFIAFIILGSVVAIY. Residues 120 to 238 lie on the Cytoplasmic side of the membrane; that stretch reads CCTCLRPKEP…GKSCPDFSSS (119 aa). The disordered stretch occupies residues 151-173; that stretch reads TSTSPRAPSRQSSTATSSSSTGG. Over residues 159–173 the composition is skewed to low complexity; that stretch reads SRQSSTATSSSSTGG.

The protein belongs to the shisa family.

It is found in the endoplasmic reticulum membrane. In terms of biological role, plays an essential role in the maturation of presomitic mesoderm cells by individual attenuation of both FGF and WNT signaling. The polypeptide is Protein shisa-3 homolog (SHISA3) (Homo sapiens (Human)).